Consider the following 362-residue polypeptide: Chorismate synthase (362 aa).

NADP(+) is bound by residues arginine 48 and arginine 54. Residues 131–133 (RSS), 243–244 (NA), glycine 287, 302–306 (KPTSS), and arginine 328 each bind FMN.

This sequence belongs to the chorismate synthase family. In terms of assembly, homotetramer. FMNH2 is required as a cofactor.

The catalysed reaction is 5-O-(1-carboxyvinyl)-3-phosphoshikimate = chorismate + phosphate. It functions in the pathway metabolic intermediate biosynthesis; chorismate biosynthesis; chorismate from D-erythrose 4-phosphate and phosphoenolpyruvate: step 7/7. Functionally, catalyzes the anti-1,4-elimination of the C-3 phosphate and the C-6 proR hydrogen from 5-enolpyruvylshikimate-3-phosphate (EPSP) to yield chorismate, which is the branch point compound that serves as the starting substrate for the three terminal pathways of aromatic amino acid biosynthesis. This reaction introduces a second double bond into the aromatic ring system. The polypeptide is Chorismate synthase (Bradyrhizobium diazoefficiens (strain JCM 10833 / BCRC 13528 / IAM 13628 / NBRC 14792 / USDA 110)).